The sequence spans 561 residues: Urocanate hydratase (561 aa).

NAD(+) is bound by residues Gly-52–Gly-53, Gln-130, Gly-176–Gly-178, Glu-196, Arg-201, Asn-242–Ala-243, Gln-263–His-267, Tyr-273–Leu-274, and Tyr-322. Cys-410 is a catalytic residue. Position 492 (Gly-492) interacts with NAD(+).

The protein belongs to the urocanase family. It depends on NAD(+) as a cofactor.

Its subcellular location is the cytoplasm. It catalyses the reaction 4-imidazolone-5-propanoate = trans-urocanate + H2O. The protein operates within amino-acid degradation; L-histidine degradation into L-glutamate; N-formimidoyl-L-glutamate from L-histidine: step 2/3. In terms of biological role, catalyzes the conversion of urocanate to 4-imidazolone-5-propionate. The sequence is that of Urocanate hydratase from Citrobacter koseri (strain ATCC BAA-895 / CDC 4225-83 / SGSC4696).